The following is a 171-amino-acid chain: Putative phosphoesterase ABC1741 (171 aa).

Catalysis depends on H34, which acts as the Proton donor. 2 consecutive short sequence motifs (HXTX) follow at residues 34–37 (HITL) and 116–119 (HITI). H116 (proton acceptor) is an active-site residue.

The protein belongs to the 2H phosphoesterase superfamily. YjcG family.

This is Putative phosphoesterase ABC1741 from Shouchella clausii (strain KSM-K16) (Alkalihalobacillus clausii).